A 569-amino-acid chain; its full sequence is Protein Noxp20 (569 aa).

3 disordered regions span residues 1-87 (MSDD…GEVT), 102-126 (GDTG…QAGR), and 165-208 (ANSA…GSRG). Residue T197 is modified to Phosphothreonine. The residue at position 262 (S262) is a Phosphoserine. The segment at 404 to 439 (VSIDVAKGSEEEEKEEGKEEKAEEPEEDKTGGQGAK) is disordered.

It belongs to the FAM114 family. In terms of tissue distribution, over-expressed in brain. Also detected in lung, stomach, and in a lower extent in testis and thymus.

The protein resides in the cytoplasm. Functionally, may play a role in neuronal cell development. This is Protein Noxp20 (Fam114a1) from Mus musculus (Mouse).